The primary structure comprises 164 residues: Phosphopantetheine adenylyltransferase (164 aa).

Ser11 contacts substrate. Residues 11–12 (SF) and His19 contribute to the ATP site. The substrate site is built by Lys43, Ala76, and Arg90. Residues 91 to 93 (GLR), Glu101, and 126 to 132 (YQHISSS) each bind ATP.

It belongs to the bacterial CoaD family. In terms of assembly, homohexamer. Mg(2+) is required as a cofactor.

It localises to the cytoplasm. It catalyses the reaction (R)-4'-phosphopantetheine + ATP + H(+) = 3'-dephospho-CoA + diphosphate. It functions in the pathway cofactor biosynthesis; coenzyme A biosynthesis; CoA from (R)-pantothenate: step 4/5. In terms of biological role, reversibly transfers an adenylyl group from ATP to 4'-phosphopantetheine, yielding dephospho-CoA (dPCoA) and pyrophosphate. This is Phosphopantetheine adenylyltransferase from Streptococcus gordonii (strain Challis / ATCC 35105 / BCRC 15272 / CH1 / DL1 / V288).